The following is a 68-amino-acid chain: Protein P34 (68 aa).

Transmembrane regions (helical) follow at residues Phe4–Leu24 and Gly41–Met61.

The protein localises to the virion membrane. This Acinetobacter calcoaceticus (Arthrobacter siderocapsulatus) protein is Protein P34 (XXXIV).